Reading from the N-terminus, the 297-residue chain is Protein LRATD1 (297 aa).

Ser38 is subject to Phosphoserine. The LRAT domain maps to Pro138–Ala233.

Belongs to the LRATD family.

The protein localises to the cytoplasm. Its function is as follows. May play a role in cell morphology and motility. In Bos taurus (Bovine), this protein is Protein LRATD1 (LRATD1).